Here is a 129-residue protein sequence, read N- to C-terminus: Large ribosomal subunit protein uL22 (129 aa).

It belongs to the universal ribosomal protein uL22 family. In terms of assembly, part of the 50S ribosomal subunit.

This protein binds specifically to 23S rRNA; its binding is stimulated by other ribosomal proteins, e.g. L4, L17, and L20. It is important during the early stages of 50S assembly. It makes multiple contacts with different domains of the 23S rRNA in the assembled 50S subunit and ribosome. Its function is as follows. The globular domain of the protein is located near the polypeptide exit tunnel on the outside of the subunit, while an extended beta-hairpin is found that lines the wall of the exit tunnel in the center of the 70S ribosome. This is Large ribosomal subunit protein uL22 from Bartonella henselae (strain ATCC 49882 / DSM 28221 / CCUG 30454 / Houston 1) (Rochalimaea henselae).